The chain runs to 284 residues: Pantothenate synthetase (284 aa).

Methionine 30–histidine 37 contributes to the ATP binding site. Residue histidine 37 is the Proton donor of the active site. Glutamine 61 lines the (R)-pantoate pocket. Glutamine 61 provides a ligand contact to beta-alanine. Glycine 149–aspartate 152 serves as a coordination point for ATP. Glutamine 155 is a (R)-pantoate binding site. ATP contacts are provided by residues isoleucine 178 and leucine 186–arginine 189.

It belongs to the pantothenate synthetase family. As to quaternary structure, homodimer.

The protein resides in the cytoplasm. The catalysed reaction is (R)-pantoate + beta-alanine + ATP = (R)-pantothenate + AMP + diphosphate + H(+). The protein operates within cofactor biosynthesis; (R)-pantothenate biosynthesis; (R)-pantothenate from (R)-pantoate and beta-alanine: step 1/1. In terms of biological role, catalyzes the condensation of pantoate with beta-alanine in an ATP-dependent reaction via a pantoyl-adenylate intermediate. This chain is Pantothenate synthetase, found in Salmonella choleraesuis (strain SC-B67).